Consider the following 245-residue polypeptide: MTRSKFTSQGIKSKHAKKLKKQDYTVFSQKLGYTFKQPDLLQEALTHRSLGFPNNERLEFLGDSVLNCAVSTLLFKRFLLLPEGDLTRLRANFVNQDALHQLASALGIGELILLGDGERKSGGHQRPSILANAMEAIIGAIYLESGFEKVDQVIVALYDPLLNQLDPDLFGKDPKTLLQEYLQSRKVDLPEYSTLLTRGDAHAQVFHVECVIPEFAIRTSGEGTSRRRAEQEAARRAYKLAVVRH.

The RNase III domain occupies 24–146; that stretch reads YTVFSQKLGY…IIGAIYLESG (123 aa). Residue E59 coordinates Mg(2+). Residue D63 is part of the active site. Residues N132 and E135 each coordinate Mg(2+). E135 is an active-site residue. The DRBM domain maps to 173–243; it reads DPKTLLQEYL…ARRAYKLAVV (71 aa).

The protein belongs to the ribonuclease III family. Homodimer. Mg(2+) serves as cofactor.

The protein resides in the cytoplasm. It carries out the reaction Endonucleolytic cleavage to 5'-phosphomonoester.. In terms of biological role, digests double-stranded RNA. Involved in the processing of primary rRNA transcript to yield the immediate precursors to the large and small rRNAs (23S and 16S). Processes some mRNAs, and tRNAs when they are encoded in the rRNA operon. Processes pre-crRNA and tracrRNA of type II CRISPR loci if present in the organism. This Nitrosomonas eutropha (strain DSM 101675 / C91 / Nm57) protein is Ribonuclease 3.